Consider the following 457-residue polypeptide: Solute carrier family 38 member 6 (457 aa).

At M1 the chain carries N-acetylmethionine. Residues S4 and S7 each carry the phosphoserine modification. The next 5 membrane-spanning stretches (helical) occupy residues 48–68, 70–90, 112–132, 171–191, and 192–212; these read FGLS…LGLA, VMAN…ALLA, LGLF…IIIQ, LLII…KIGF, and LGYT…VVVI. Residues C219 and C239 are joined by a disulfide bond. N234 carries N-linked (GlcNAc...) asparagine glycosylation. Residues 251 to 271 traverse the membrane as a helical segment; the sequence is VYAIPTMAFSFLCHTSVLPIY. N-linked (GlcNAc...) asparagine glycosylation occurs at N284. 5 consecutive transmembrane segments (helical) span residues 289–309, 328–348, 372–392, 395–415, and 432–452; these read AIAL…LTFY, AAVM…VPLI, SLTT…VPDI, VFGV…PGLF, and ALSL…LIIL.

This sequence belongs to the amino acid/polyamine transporter 2 family.

The protein resides in the cell membrane. Its subcellular location is the synapse. The catalysed reaction is L-glutamine(out) = L-glutamine(in). It catalyses the reaction L-glutamate(out) = L-glutamate(in). Its function is as follows. Amino acid transporter with an apparent selectivity for L-glutamine and L-glutamate. May facilitate glutamine uptake in excitatory neurons. The transport mechanism remains to be elucidated. This chain is Solute carrier family 38 member 6, found in Rattus norvegicus (Rat).